Consider the following 164-residue polypeptide: MEMTNAQRLLLSNQYKMMSMLDPENAERYRRLQTIIERGFGLQLRELDRDFGELPEETCRSIIDIMEMHHALQVSYNNLKDRQDIDARRLEFLGFDAATEARYLSYVRFLVNTEGRYTHFDCGSHGFNAQTKMWDKYLRMLAVWHACPRQYHLSAVEIMQILNA.

Belongs to the UPF0304 family.

This is UPF0304 protein NT01EI_2691 from Edwardsiella ictaluri (strain 93-146).